An 896-amino-acid chain; its full sequence is Putative mannosylglycerate hydrolase (896 aa).

4 residues coordinate a divalent metal cation: H12, D14, D125, and H348. D125 acts as the Nucleophile in catalysis.

This sequence belongs to the glycosyl hydrolase 38 family. A divalent metal cation is required as a cofactor.

The enzyme catalyses (2R)-2-O-(6-phospho-alpha-D-mannosyl)-glycerate + H2O = alpha-D-mannose 6-phosphate + (R)-glycerate. In terms of biological role, may hydrolyze 6-phospho-mannosyl-D-glycerate to mannose-6-phosphate and glycerate. This chain is Putative mannosylglycerate hydrolase (mngB), found in Halalkalibacterium halodurans (strain ATCC BAA-125 / DSM 18197 / FERM 7344 / JCM 9153 / C-125) (Bacillus halodurans).